The sequence spans 197 residues: ATP-dependent Clp protease proteolytic subunit (197 aa).

Catalysis depends on Ser102, which acts as the Nucleophile. His127 is a catalytic residue.

It belongs to the peptidase S14 family. Fourteen ClpP subunits assemble into 2 heptameric rings which stack back to back to give a disk-like structure with a central cavity, resembling the structure of eukaryotic proteasomes.

Its subcellular location is the cytoplasm. It catalyses the reaction Hydrolysis of proteins to small peptides in the presence of ATP and magnesium. alpha-casein is the usual test substrate. In the absence of ATP, only oligopeptides shorter than five residues are hydrolyzed (such as succinyl-Leu-Tyr-|-NHMec, and Leu-Tyr-Leu-|-Tyr-Trp, in which cleavage of the -Tyr-|-Leu- and -Tyr-|-Trp bonds also occurs).. Cleaves peptides in various proteins in a process that requires ATP hydrolysis. Has a chymotrypsin-like activity. Plays a major role in the degradation of misfolded proteins. This Buchnera aphidicola subsp. Schizaphis graminum (strain Sg) protein is ATP-dependent Clp protease proteolytic subunit.